A 329-amino-acid polypeptide reads, in one-letter code: Peroxidase 51 (329 aa).

Positions 1–25 (MVVMNKTNLLLLILSLFLAINLSSA) are cleaved as a signal peptide. Intrachain disulfides connect Cys-36/Cys-119, Cys-69/Cys-74, Cys-125/Cys-325, and Cys-204/Cys-236. His-67 functions as the Proton acceptor in the catalytic mechanism. Ca(2+) contacts are provided by Asp-68, Val-71, Gly-73, Asp-75, and Ser-77. Residue Pro-167 participates in substrate binding. Heme b is bound at residue His-197. Thr-198 contributes to the Ca(2+) binding site. Residue Asn-215 is glycosylated (N-linked (GlcNAc...) asparagine). Residues Asp-249, Thr-252, and Asp-257 each coordinate Ca(2+).

This sequence belongs to the peroxidase family. Classical plant (class III) peroxidase subfamily. Heme b serves as cofactor. Requires Ca(2+) as cofactor.

Its subcellular location is the secreted. The catalysed reaction is 2 a phenolic donor + H2O2 = 2 a phenolic radical donor + 2 H2O. Its function is as follows. Removal of H(2)O(2), oxidation of toxic reductants, biosynthesis and degradation of lignin, suberization, auxin catabolism, response to environmental stresses such as wounding, pathogen attack and oxidative stress. These functions might be dependent on each isozyme/isoform in each plant tissue. The chain is Peroxidase 51 (PER51) from Arabidopsis thaliana (Mouse-ear cress).